Here is a 239-residue protein sequence, read N- to C-terminus: MIAELIREIGIEGARFIEENIDEQFKALSYLSEGMDRVNFVRLVIANALVSYQLTGKGEMWWWEFAKYFKGKEVKTIYSAYKEFLPNSKFNRRLIQQKLLRIKKIEPFLSTLTEESIERYYEDMTLLWKAIAKVLKVDRESKTVVFSVKMFGYAARIVLSKFNPYPMEIPIPEDVRIIKLTRKLTNERPRDFWMKIAKESNVPPLHIDSILWPLLGGARVEEAPPELKEKLEKLIRVIR.

Residues Gln24, Ser51, and Trp62 each contribute to the 8-oxoguanine site. A helix-hairpin-helix region spans residues 118-182 (ERYYEDMTLL…EDVRIIKLTR (65 aa)). The active-site Schiff-base intermediate with DNA is the Lys142. 8-oxoguanine contacts are provided by Phe146 and Pro172. Asp174 is an active-site residue. Residues Asp208 and Trp212 each coordinate 8-oxoguanine.

This sequence belongs to the archaeal N-glycosylase/DNA lyase (AGOG) family.

It carries out the reaction 2'-deoxyribonucleotide-(2'-deoxyribose 5'-phosphate)-2'-deoxyribonucleotide-DNA = a 3'-end 2'-deoxyribonucleotide-(2,3-dehydro-2,3-deoxyribose 5'-phosphate)-DNA + a 5'-end 5'-phospho-2'-deoxyribonucleoside-DNA + H(+). Its function is as follows. DNA repair enzyme that is part of the base excision repair (BER) pathway; protects from oxidative damage by removing the major product of DNA oxidation, 8-oxoguanine (GO), from single- and double-stranded DNA substrates. In Pyrococcus horikoshii (strain ATCC 700860 / DSM 12428 / JCM 9974 / NBRC 100139 / OT-3), this protein is N-glycosylase/DNA lyase.